The primary structure comprises 363 residues: Mitochondrial RNA-splicing protein MRS1 (363 aa).

Its subcellular location is the mitochondrion. Function in mitochondrial RNA splicing in the excision of mitochondrial group I introns aI1 and aI5 beta from COX1 and bI3 from COB transcripts and thus would be involved in obtaining the correct structure of the intron, to allow the RNA catalyzed reactions to occur. The polypeptide is Mitochondrial RNA-splicing protein MRS1 (MRS1) (Saccharomyces paradoxus (Yeast)).